The primary structure comprises 721 residues: Mitogen-activated protein kinase 6 (721 aa).

Residues 20–316 (YMDLKPLGCG…AEEALSHPYM (297 aa)) form the Protein kinase domain. ATP is bound by residues 26-34 (LGCGGNGLV) and Lys49. Asp152 serves as the catalytic Proton acceptor. A Phosphothreonine modification is found at Thr626. The TXY motif lies at 626-628 (TSY). Tyr628 is modified (phosphotyrosine).

This sequence belongs to the protein kinase superfamily. CMGC Ser/Thr protein kinase family. MAP kinase subfamily. Mg(2+) is required as a cofactor. In terms of processing, dually phosphorylated on Thr-626 and Tyr-628, which activates the enzyme.

The catalysed reaction is L-seryl-[protein] + ATP = O-phospho-L-seryl-[protein] + ADP + H(+). The enzyme catalyses L-threonyl-[protein] + ATP = O-phospho-L-threonyl-[protein] + ADP + H(+). Its activity is regulated as follows. Activated by threonine and tyrosine phosphorylation. Functionally, phosphorylates microtubule-associated protein 2 (MAP2). May promote entry in the cell cycle. The sequence is that of Mitogen-activated protein kinase 6 (MAPK6) from Gallus gallus (Chicken).